Here is a 243-residue protein sequence, read N- to C-terminus: 1-(5-phosphoribosyl)-5-[(5-phosphoribosylamino)methylideneamino] imidazole-4-carboxamide isomerase (243 aa).

D8 functions as the Proton acceptor in the catalytic mechanism. D129 (proton donor) is an active-site residue.

This sequence belongs to the HisA/HisF family.

It localises to the cytoplasm. It catalyses the reaction 1-(5-phospho-beta-D-ribosyl)-5-[(5-phospho-beta-D-ribosylamino)methylideneamino]imidazole-4-carboxamide = 5-[(5-phospho-1-deoxy-D-ribulos-1-ylimino)methylamino]-1-(5-phospho-beta-D-ribosyl)imidazole-4-carboxamide. Its pathway is amino-acid biosynthesis; L-histidine biosynthesis; L-histidine from 5-phospho-alpha-D-ribose 1-diphosphate: step 4/9. The chain is 1-(5-phosphoribosyl)-5-[(5-phosphoribosylamino)methylideneamino] imidazole-4-carboxamide isomerase from Citrifermentans bemidjiense (strain ATCC BAA-1014 / DSM 16622 / JCM 12645 / Bem) (Geobacter bemidjiensis).